The sequence spans 258 residues: MSDWLSLAKSNDPHIVVLTMDVHLSYFRDEYNFEEALRLLPFEWQCRVIQKRAHKDKVTALCNRLLQLYGCRLELNTQAIDFTQGKYGKPFVKNTESFNFSMTNGENFVSIIMANLFQTEVGIDLASINDFTSEGDLKIYEDVLSTEEYEKINNQTNLLDMKRLFAFYWSVKECYTKYLGVGLNGDLKIINVSLFSAPLINEAVSTFKLKDITFHSRWVSDNEILTYCFPAQYDFLKPIHAILNVVSVIEGIKTQFLT.

Belongs to the P-Pant transferase superfamily. AcpS family.

It carries out the reaction apo-[ACP] + CoA = holo-[ACP] + adenosine 3',5'-bisphosphate + H(+). Functionally, catalyzes the transfer of a 4'-phosphopantetheine moiety from coenzyme A to a serine residue of acceptor proteins, such as alpha-aminoadipate reductase. Necessary for alpha-aminoadipate reductase activity. This is L-aminoadipate-semialdehyde dehydrogenase-phosphopantetheinyl transferase (LYS5) from Candida glabrata (strain ATCC 2001 / BCRC 20586 / JCM 3761 / NBRC 0622 / NRRL Y-65 / CBS 138) (Yeast).